Consider the following 94-residue polypeptide: Myosuppressin (94 aa).

An N-terminal signal peptide occupies residues 1–24 (MMSPTLMILISITTMAILSGESFG). Positions 25–80 (AMPAQCNSEFLEELPPRLRKICVAIARIWDAREMNDFVDDREYRENLPRYDSSVKR) are excised as a propeptide. The residue at position 81 (Gln-81) is a Pyrrolidone carboxylic acid. Position 90 is a phenylalanine amide (Phe-90).

As to expression, expressed throughout the nervous system (at protein level).

The protein resides in the secreted. In terms of biological role, myoinhibiting neuropeptide. In Camponotus floridanus (Florida carpenter ant), this protein is Myosuppressin.